The chain runs to 1088 residues: RNA-directed RNA polymerase (1088 aa).

In terms of domain architecture, RdRp catalytic spans 501 to 687 (LSYGDVTRFL…AKRYLAGGKI (187 aa)).

Belongs to the reoviridae RNA-directed RNA polymerase family. Interacts with VP3 (Potential). Interacts with VP2; this interaction activates VP1. Interacts with NSP5; this interaction is probably necessary for the formation of functional virus factories. Interacts with NSP2; this interaction is weak. Requires Mg(2+) as cofactor.

The protein localises to the virion. The enzyme catalyses RNA(n) + a ribonucleoside 5'-triphosphate = RNA(n+1) + diphosphate. Functionally, RNA-directed RNA polymerase that is involved in both transcription and genome replication. Together with VP3 capping enzyme, forms an enzyme complex positioned near the channels situated at each of the five-fold vertices of the core. Following infection, the outermost layer of the virus is lost, leaving a double-layered particle (DLP) made up of the core and VP6 shell. VP1 then catalyzes the transcription of fully conservative plus-strand genomic RNAs that are extruded through the DLP's channels into the cytoplasm where they function as mRNAs for translation of viral proteins. One copy of each of the viral (+)RNAs is also recruited during core assembly, together with newly synthesized polymerase complexes and VP2. The polymerase of these novo-formed particles catalyzes the synthesis of complementary minus-strands leading to dsRNA formation. To do so, the polymerase specifically recognizes and binds 4 bases 5'-UGUG-3' in the conserved 3'-sequence of plus-strand RNA templates. VP2 presumably activates the autoinhibited VP1-RNA complex to coordinate packaging and genome replication. Once dsRNA synthesis is complete, the polymerase switches to the transcriptional mode, thus providing secondary transcription. The sequence is that of RNA-directed RNA polymerase from Rotavirus A (strain RVA/Human/Japan/KU/1995/G1P1A[8]) (RV-A).